The sequence spans 620 residues: Probable potassium transport system protein Kup 1 (620 aa).

12 helical membrane passes run 7–27 (GIGL…TSPL), 50–70 (VLSL…VIVI), 102–122 (MMLG…TPAI), 136–156 (PDLK…LFAI), 168–188 (FGPV…ANIV), 211–231 (LMSF…EALY), 246–266 (WFGL…ALLI), 284–304 (MVVP…QAVI), 336–356 (IYVP…VVGF), 368–388 (IAVT…AALL), 393–413 (PVVV…FFAA), and 415–435 (IIKV…SFTV).

It belongs to the HAK/KUP transporter (TC 2.A.72) family.

Its subcellular location is the cell inner membrane. The catalysed reaction is K(+)(in) + H(+)(in) = K(+)(out) + H(+)(out). Its function is as follows. Transport of potassium into the cell. Likely operates as a K(+):H(+) symporter. The protein is Probable potassium transport system protein Kup 1 of Rhodopseudomonas palustris (strain ATCC BAA-98 / CGA009).